Reading from the N-terminus, the 250-residue chain is Proteasome subunit alpha type-4-A (250 aa).

Glycyl lysine isopeptide (Lys-Gly) (interchain with G-Cter in ubiquitin) cross-links involve residues K40 and K64.

Belongs to the peptidase T1A family. In terms of assembly, component of the 20S core complex of the 26S proteasome. The 26S proteasome is composed of a core protease (CP), known as the 20S proteasome, capped at one or both ends by the 19S regulatory particle (RP/PA700). The 20S proteasome core is composed of 28 subunits that are arranged in four stacked rings, resulting in a barrel-shaped structure. The two end rings are each formed by seven alpha subunits, and the two central rings are each formed by seven beta subunits. The catalytic chamber with the active sites is on the inside of the barrel. In terms of tissue distribution, ubiquitous low levels, higher expression in siliques and flowers.

It is found in the cytoplasm. The protein resides in the nucleus. Functionally, the proteasome is a multicatalytic proteinase complex which is characterized by its ability to cleave peptides with Arg, Phe, Tyr, Leu, and Glu adjacent to the leaving group at neutral or slightly basic pH. The proteasome has an ATP-dependent proteolytic activity. The sequence is that of Proteasome subunit alpha type-4-A (PAC1) from Arabidopsis thaliana (Mouse-ear cress).